Here is a 342-residue protein sequence, read N- to C-terminus: MYNLKDMTLEEMEEFFVNLGESKFRAKQLYKWIYDKRVTDFDLMTDISKNLRAKLKEIAYISELKIIERRVSQIDDTVKYLFLLEDKNIIEGVAIKYKFGNTACVSTQVGCNMKCKFCASAIGGKVRDLKASEMVDQVMAIDSDYGKISNIVLMGSGEPFDNYDEVMKFIKIVNNPYGLKIGKRHITISTVGIVPKIYQFADEELQVNLSISLHAPNNELRNELMPINRAYPLEELMKACRYYIEKTNRRITFEYALIDGVNDKKEHAYQLVDLLKGMLCHVNLIPINYVKEIGFRKSNNEKVMMFKKIIENAGITCTVRRELGSDIEAACGQLRRKYLKEG.

E91 serves as the catalytic Proton acceptor. Residues Y97 to D326 form the Radical SAM core domain. A disulfide bridge connects residues C104 and C331. The [4Fe-4S] cluster site is built by C111, C115, and C118. S-adenosyl-L-methionine-binding positions include G157–E158, S189, S212–H214, and N288. The S-methylcysteine intermediate role is filled by C331.

Belongs to the radical SAM superfamily. RlmN family. [4Fe-4S] cluster serves as cofactor.

The protein resides in the cytoplasm. The enzyme catalyses adenosine(2503) in 23S rRNA + 2 reduced [2Fe-2S]-[ferredoxin] + 2 S-adenosyl-L-methionine = 2-methyladenosine(2503) in 23S rRNA + 5'-deoxyadenosine + L-methionine + 2 oxidized [2Fe-2S]-[ferredoxin] + S-adenosyl-L-homocysteine. It carries out the reaction adenosine(37) in tRNA + 2 reduced [2Fe-2S]-[ferredoxin] + 2 S-adenosyl-L-methionine = 2-methyladenosine(37) in tRNA + 5'-deoxyadenosine + L-methionine + 2 oxidized [2Fe-2S]-[ferredoxin] + S-adenosyl-L-homocysteine. Specifically methylates position 2 of adenine 2503 in 23S rRNA and position 2 of adenine 37 in tRNAs. The polypeptide is Probable dual-specificity RNA methyltransferase RlmN (Caldanaerobacter subterraneus subsp. tengcongensis (strain DSM 15242 / JCM 11007 / NBRC 100824 / MB4) (Thermoanaerobacter tengcongensis)).